A 122-amino-acid polypeptide reads, in one-letter code: NADH-quinone oxidoreductase subunit A (122 aa).

Helical transmembrane passes span 10–30 (MIVLIFLLLGILLPVVALTLG), 66–86 (IFALLFVIFDVETLFLYPWAV), and 91–111 (LGLFALIEMLIFVVMLLVGLA).

This sequence belongs to the complex I subunit 3 family. NDH-1 is composed of 14 different subunits. Subunits NuoA, H, J, K, L, M, N constitute the membrane sector of the complex.

It localises to the cell membrane. The enzyme catalyses a quinone + NADH + 5 H(+)(in) = a quinol + NAD(+) + 4 H(+)(out). NDH-1 shuttles electrons from NADH, via FMN and iron-sulfur (Fe-S) centers, to quinones in the respiratory chain. The immediate electron acceptor for the enzyme in this species is believed to be a menaquinone. Couples the redox reaction to proton translocation (for every two electrons transferred, four hydrogen ions are translocated across the cytoplasmic membrane), and thus conserves the redox energy in a proton gradient. The sequence is that of NADH-quinone oxidoreductase subunit A from Bacillus thuringiensis subsp. konkukian (strain 97-27).